The primary structure comprises 321 residues: MKPLNVIFAGTPDFAARHLQALIESQHKVIAVYTQPDRPAGRGKKLQSSPVKALALENDIPVLQPKSLRDETAQQELTALNADIMVVVAYGLILPKVVLDTPRLGCINVHGSILPRWRGAAPIQRALWAGDAETGVTIMQMDIGLDTGDMLLKTQLKIEDTDTSATLYEKLADQGPSALVEALAGIAADTLPAEKQDESLANYAEKLSKEEAQIDWSKSAEALWREIRAFNPWPVSHYQHAGNTIKVWQSHVSEKTSTAAAGTVISADKNGIDVATGNGVLTITSMQLPGKKPLSVADILNSRADWFTAGTQLNNAMGDQG.

Ser-112–Pro-115 provides a ligand contact to (6S)-5,6,7,8-tetrahydrofolate.

This sequence belongs to the Fmt family.

It carries out the reaction L-methionyl-tRNA(fMet) + (6R)-10-formyltetrahydrofolate = N-formyl-L-methionyl-tRNA(fMet) + (6S)-5,6,7,8-tetrahydrofolate + H(+). Its function is as follows. Attaches a formyl group to the free amino group of methionyl-tRNA(fMet). The formyl group appears to play a dual role in the initiator identity of N-formylmethionyl-tRNA by promoting its recognition by IF2 and preventing the misappropriation of this tRNA by the elongation apparatus. The chain is Methionyl-tRNA formyltransferase from Shewanella piezotolerans (strain WP3 / JCM 13877).